The sequence spans 380 residues: MKNEMLGVILAGGKGTRLGKLTHNQAKPAVPFGGRYRIIDFTLSNCVNSGVKNIGVITQYQPLNLNAHIGNGASWGLDDLNAGVTILQPYSNNEGSKWFEGTAHAIYQNIGYIDQMDPEYILILSGDHIYKMDYEAMLDQHKETGASLTVAVIDVPWDEASRFGIMNTDDNNRIIDFEEKPAEPKSNHASMGIYIFNWKRLREVLVNSFTRNQDMVDFGKNVIPYYLKSGESVFAYNFKGYWKDVGTIDSLWHANMEFLDENNELNLQDRTWRIYSRNPIAPPQIIAETAEIKDAMIVDGSYIAGKVDHSILSANVRIQTGSVVTDSVIMPGAKIGKNVTIHRAIIGEGAVIGDDVVIDGTDEIAVIGNKEVVGVTSHEE.

Alpha-D-glucose 1-phosphate is bound by residues G164, 179-180 (EK), and S190.

It belongs to the bacterial/plant glucose-1-phosphate adenylyltransferase family. As to quaternary structure, homotetramer.

It catalyses the reaction alpha-D-glucose 1-phosphate + ATP + H(+) = ADP-alpha-D-glucose + diphosphate. Its pathway is glycan biosynthesis; glycogen biosynthesis. Its function is as follows. Involved in the biosynthesis of ADP-glucose, a building block required for the elongation reactions to produce glycogen. Catalyzes the reaction between ATP and alpha-D-glucose 1-phosphate (G1P) to produce pyrophosphate and ADP-Glc. This is Glucose-1-phosphate adenylyltransferase from Ligilactobacillus salivarius (strain UCC118) (Lactobacillus salivarius).